The following is a 447-amino-acid chain: Tubulin beta chain (447 aa).

Residues Q11, E69, S138, G142, T143, G144, N204, and N226 each coordinate GTP. A Mg(2+)-binding site is contributed by E69. The tract at residues 424 to 447 (QYQEASVSEGEEEYDEEAPLEGEE) is disordered. Positions 432–447 (EGEEEYDEEAPLEGEE) are enriched in acidic residues.

It belongs to the tubulin family. In terms of assembly, dimer of alpha and beta chains. A typical microtubule is a hollow water-filled tube with an outer diameter of 25 nm and an inner diameter of 15 nM. Alpha-beta heterodimers associate head-to-tail to form protofilaments running lengthwise along the microtubule wall with the beta-tubulin subunit facing the microtubule plus end conferring a structural polarity. Microtubules usually have 13 protofilaments but different protofilament numbers can be found in some organisms and specialized cells. Mg(2+) serves as cofactor.

Its subcellular location is the cytoplasm. It localises to the cytoskeleton. Functionally, tubulin is the major constituent of microtubules, a cylinder consisting of laterally associated linear protofilaments composed of alpha- and beta-tubulin heterodimers. Microtubules grow by the addition of GTP-tubulin dimers to the microtubule end, where a stabilizing cap forms. Below the cap, tubulin dimers are in GDP-bound state, owing to GTPase activity of alpha-tubulin. This chain is Tubulin beta chain, found in Venturia inaequalis (Apple scab fungus).